The sequence spans 356 residues: Chorismate synthase (356 aa).

R44 provides a ligand contact to NADP(+). FMN-binding positions include 121 to 123 (HFS), G278, 293 to 297 (KPTPS), and R320.

Belongs to the chorismate synthase family. The cofactor is FMNH2.

It catalyses the reaction 5-O-(1-carboxyvinyl)-3-phosphoshikimate = chorismate + phosphate. It functions in the pathway metabolic intermediate biosynthesis; chorismate biosynthesis; chorismate from D-erythrose 4-phosphate and phosphoenolpyruvate: step 7/7. Functionally, catalyzes the anti-1,4-elimination of the C-3 phosphate and the C-6 proR hydrogen from 5-enolpyruvylshikimate-3-phosphate (EPSP) to yield chorismate, which is the branch point compound that serves as the starting substrate for the three terminal pathways of aromatic amino acid biosynthesis. This reaction introduces a second double bond into the aromatic ring system. This Pyrococcus abyssi (strain GE5 / Orsay) protein is Chorismate synthase.